The following is a 345-amino-acid chain: MDSTLGLEIIEVVEQAAIASAKWMGKGEKNTADQVAVEAMRERMNKIHMRGRIVIGEGERDDAPMLYIGEEVGICTREDAKSFCNPDELVEIDIAVDPCEGTNLVAYGQNGSMAVLAISEKGGLFAAPDFYMKKLAAPPAAKGHVDIDKSATENLKILSDCLNRSIEELVVVVMDRPRHKELIQEIRNAGARVRLISDGDVSAAISCAFSGTNIHALMGIGAAPEGVISAAAMRCLGGHFQGQLIYDPEVVKTGLIGESREGNLERLASMGIKNPDQVYNCEELACGETVLFAACGITPGTLMEGVRFFHGGVRTQSLVISSQSSTARFVDTVHMKESPKVIQLH.

Mn(2+)-binding residues include aspartate 33, glutamate 57, aspartate 97, and glutamate 100. Substrate contacts are provided by residues 100–102 (EGT), tyrosine 131, 176–178 (RPR), and 198–200 (DGD). Glutamate 225 serves as a coordination point for Mn(2+).

Belongs to the FBPase class 2 family. Homotetramer. Mn(2+) serves as cofactor.

It carries out the reaction beta-D-fructose 1,6-bisphosphate + H2O = beta-D-fructose 6-phosphate + phosphate. It catalyses the reaction D-sedoheptulose 1,7-bisphosphate + H2O = D-sedoheptulose 7-phosphate + phosphate. It participates in carbohydrate biosynthesis; Calvin cycle. In terms of biological role, catalyzes the hydrolysis of fructose 1,6-bisphosphate (Fru 1,6-P2) and sedoheptulose 1,7-bisphosphate (Sed 1,7-P2) to fructose 6-phosphate and sedoheptulose 7-phosphate, respectively. The sequence is that of D-fructose 1,6-bisphosphatase class 2/sedoheptulose 1,7-bisphosphatase from Synechocystis sp. (strain ATCC 27184 / PCC 6803 / Kazusa).